Reading from the N-terminus, the 485-residue chain is Pelle-like serine/threonine-protein kinase pik-1 (485 aa).

The segment covering 115-132 (TSRVSKQMVQPPGSQSAS) has biased composition (polar residues). Residues 115-155 (TSRVSKQMVQPPGSQSASRLKKTEIKESSPSPAAAAASQLS) are disordered. Over residues 142–152 (SSPSPAAAAAS) the composition is skewed to low complexity. Residues 185-485 (FAVSNVIGKG…LCKNSIPPVV (301 aa)) enclose the Protein kinase domain. ATP contacts are provided by residues 191-199 (IGKGGYGTV) and lysine 214. Aspartate 318 (proton acceptor) is an active-site residue.

The protein belongs to the protein kinase superfamily. TKL Ser/Thr protein kinase family. Pelle subfamily. As to quaternary structure, interacts with actl-1. In terms of tissue distribution, expressed in the nervous system.

It catalyses the reaction L-seryl-[protein] + ATP = O-phospho-L-seryl-[protein] + ADP + H(+). The enzyme catalyses L-threonyl-[protein] + ATP = O-phospho-L-threonyl-[protein] + ADP + H(+). In terms of biological role, through association with the adapter actl-1, may act downstream of the receptor complex composed of ilcr-1 and ilcr-2, which is a signaling complex that modulates neuronal activity and animal behavior in response to sensory neuron input. This Caenorhabditis elegans protein is Pelle-like serine/threonine-protein kinase pik-1.